An 83-amino-acid chain; its full sequence is Small ribosomal subunit protein eS21 (83 aa).

Residue Met-1 is modified to N-acetylmethionine. A Glycyl lysine isopeptide (Lys-Gly) (interchain with G-Cter in SUMO2) cross-link involves residue Lys-41. Lys-81 carries the post-translational modification N6-acetyllysine.

It belongs to the eukaryotic ribosomal protein eS21 family. In terms of assembly, component of the 40S small ribosomal subunit.

The protein localises to the cytoplasm. It localises to the cytosol. It is found in the rough endoplasmic reticulum. Its function is as follows. Component of the small ribosomal subunit. The ribosome is a large ribonucleoprotein complex responsible for the synthesis of proteins in the cell. The chain is Small ribosomal subunit protein eS21 (RPS21) from Sus scrofa (Pig).